A 336-amino-acid polypeptide reads, in one-letter code: CENP-A histone chaperone scm3 (336 aa).

The tract at residues 243–269 (RRRNPLLSSPKTPLRRSFSKSKVRNSN) is disordered. A compositionally biased stretch (basic residues) spans 255-269 (PLRRSFSKSKVRNSN).

The protein localises to the cytoplasm. The protein resides in the nucleus. Centromeric protein that plays a central role in the incorporation and maintenance of histone H3-like variant CENPA at centromeres. The protein is CENP-A histone chaperone scm3 of Schizosaccharomyces pombe (strain 972 / ATCC 24843) (Fission yeast).